The following is a 176-amino-acid chain: Ribosome rescue factor SmrB (176 aa).

The Smr domain occupies 93–168 (LDLHGYRQSE…GDAALLVLID (76 aa)).

This sequence belongs to the SmrB family. In terms of assembly, associates with collided ribosomes, but not with correctly translating polysomes.

Its function is as follows. Acts as a ribosome collision sensor. Detects stalled/collided disomes (pairs of ribosomes where the leading ribosome is stalled and a second ribosome has collided with it) and endonucleolytically cleaves mRNA at the 5' boundary of the stalled ribosome. Stalled/collided disomes form a new interface (primarily via the 30S subunits) that binds SmrB. Cleaved mRNA becomes available for tmRNA ligation, leading to ribosomal subunit dissociation and rescue of stalled ribosomes. The chain is Ribosome rescue factor SmrB from Shewanella oneidensis (strain ATCC 700550 / JCM 31522 / CIP 106686 / LMG 19005 / NCIMB 14063 / MR-1).